The sequence spans 108 residues: Pyrimidine/purine nucleoside phosphorylase (108 aa).

Belongs to the nucleoside phosphorylase PpnP family.

The enzyme catalyses a purine D-ribonucleoside + phosphate = a purine nucleobase + alpha-D-ribose 1-phosphate. It catalyses the reaction adenosine + phosphate = alpha-D-ribose 1-phosphate + adenine. It carries out the reaction cytidine + phosphate = cytosine + alpha-D-ribose 1-phosphate. The catalysed reaction is guanosine + phosphate = alpha-D-ribose 1-phosphate + guanine. The enzyme catalyses inosine + phosphate = alpha-D-ribose 1-phosphate + hypoxanthine. It catalyses the reaction thymidine + phosphate = 2-deoxy-alpha-D-ribose 1-phosphate + thymine. It carries out the reaction uridine + phosphate = alpha-D-ribose 1-phosphate + uracil. The catalysed reaction is xanthosine + phosphate = alpha-D-ribose 1-phosphate + xanthine. Functionally, catalyzes the phosphorolysis of diverse nucleosides, yielding D-ribose 1-phosphate and the respective free bases. Can use uridine, adenosine, guanosine, cytidine, thymidine, inosine and xanthosine as substrates. Also catalyzes the reverse reactions. The polypeptide is Pyrimidine/purine nucleoside phosphorylase (Polaromonas naphthalenivorans (strain CJ2)).